We begin with the raw amino-acid sequence, 419 residues long: Probable pectate lyase C (419 aa).

The first 19 residues, 1-19, serve as a signal peptide directing secretion; that stretch reads MRLGIALFSLIGLCHSVSA. N48, N164, and N201 each carry an N-linked (GlcNAc...) asparagine glycan. The active site involves R204. Positions 261-296 constitute an EF-hand domain; that stretch reads NEYFHGYVETNYYDPDRDGTLNGNELGVSASNYGGM. Residues D274, D276, D278, T280, and E285 each coordinate Ca(2+). The tract at residues 350-395 is disordered; it reads ELISDEASMGGPGDLDGGSPPTDSDGDGIPDDAETEIGSDPNTADS. The segment covering 373-386 has biased composition (acidic residues); it reads SDGDGIPDDAETEI.

It belongs to the polysaccharide lyase 1 family. It depends on Ca(2+) as a cofactor.

It is found in the secreted. It carries out the reaction Eliminative cleavage of (1-&gt;4)-alpha-D-galacturonan to give oligosaccharides with 4-deoxy-alpha-D-galact-4-enuronosyl groups at their non-reducing ends.. Its function is as follows. Pectinolytic enzyme consist of four classes of enzymes: pectin lyase, polygalacturonase, pectin methylesterase and rhamnogalacturonase. Among pectinolytic enzymes, pectin lyase is the most important in depolymerization of pectin, since it cleaves internal glycosidic bonds of highly methylated pectins. Favors pectate, the anion, over pectin, the methyl ester. The polypeptide is Probable pectate lyase C (plyC) (Aspergillus terreus (strain NIH 2624 / FGSC A1156)).